The primary structure comprises 231 residues: 2,3-bisphosphoglycerate-dependent phosphoglycerate mutase (231 aa).

Substrate contacts are provided by residues 8–15 (RHGESEWN), 21–22 (TG), Arg60, 87–90 (ERHY), Lys98, 114–115 (RR), and 183–184 (GN). Residue His9 is the Tele-phosphohistidine intermediate of the active site. Catalysis depends on Glu87, which acts as the Proton donor/acceptor.

It belongs to the phosphoglycerate mutase family. BPG-dependent PGAM subfamily.

It catalyses the reaction (2R)-2-phosphoglycerate = (2R)-3-phosphoglycerate. The protein operates within carbohydrate degradation; glycolysis; pyruvate from D-glyceraldehyde 3-phosphate: step 3/5. Its function is as follows. Catalyzes the interconversion of 2-phosphoglycerate and 3-phosphoglycerate. The protein is 2,3-bisphosphoglycerate-dependent phosphoglycerate mutase of Streptococcus equi subsp. zooepidemicus (strain H70).